Consider the following 513-residue polypeptide: GMP synthase [glutamine-hydrolyzing] (513 aa).

In terms of domain architecture, Glutamine amidotransferase type-1 spans 5 to 195 (LVLVIDFGGQ…VYNICGCTGD (191 aa)). Catalysis depends on Cys82, which acts as the Nucleophile. Catalysis depends on residues His169 and Glu171. The region spanning 196 to 388 (WKMDSFVEKT…LGIPEKLVFR (193 aa)) is the GMPS ATP-PPase domain. An ATP-binding site is contributed by 223–229 (SGGVDSS).

In terms of assembly, homodimer.

The enzyme catalyses XMP + L-glutamine + ATP + H2O = GMP + L-glutamate + AMP + diphosphate + 2 H(+). It participates in purine metabolism; GMP biosynthesis; GMP from XMP (L-Gln route): step 1/1. In terms of biological role, catalyzes the synthesis of GMP from XMP. The polypeptide is GMP synthase [glutamine-hydrolyzing] (Clostridium botulinum (strain Eklund 17B / Type B)).